The following is a 293-amino-acid chain: Ribosomal protein L11 methyltransferase (293 aa).

S-adenosyl-L-methionine is bound by residues Thr145, Gly166, Asp188, and Asn230.

The protein belongs to the methyltransferase superfamily. PrmA family.

The protein resides in the cytoplasm. It carries out the reaction L-lysyl-[protein] + 3 S-adenosyl-L-methionine = N(6),N(6),N(6)-trimethyl-L-lysyl-[protein] + 3 S-adenosyl-L-homocysteine + 3 H(+). Functionally, methylates ribosomal protein L11. The sequence is that of Ribosomal protein L11 methyltransferase from Erwinia tasmaniensis (strain DSM 17950 / CFBP 7177 / CIP 109463 / NCPPB 4357 / Et1/99).